The sequence spans 305 residues: Plant-type L-asparaginase (305 aa).

Thr175 functions as the Nucleophile in the catalytic mechanism. Substrate contacts are provided by residues 202–205 (RVGD) and 224–227 (TGLG).

Belongs to the Ntn-hydrolase family. As to quaternary structure, heterotetramer of two alpha and two beta chains arranged as a dimer of alpha/beta heterodimers. In terms of processing, autocleaved. Generates the alpha and beta subunits. The N-terminal residue of the beta subunit is thought to be responsible for the nucleophile hydrolase activity.

It catalyses the reaction L-asparagine + H2O = L-aspartate + NH4(+). Catalyzes the hydrolysis of L-asparagine into L-aspartate and ammonia. This Pyrococcus horikoshii (strain ATCC 700860 / DSM 12428 / JCM 9974 / NBRC 100139 / OT-3) protein is Plant-type L-asparaginase.